Here is a 379-residue protein sequence, read N- to C-terminus: Glutamate 5-kinase (379 aa).

Residue K20 participates in ATP binding. The substrate site is built by S59, D146, and N158. 220–226 (SGGMYSK) is an ATP binding site. A PUA domain is found at 285 to 362 (TGSVVVDDGA…AELTAILGDN (78 aa)).

This sequence belongs to the glutamate 5-kinase family.

Its subcellular location is the cytoplasm. The enzyme catalyses L-glutamate + ATP = L-glutamyl 5-phosphate + ADP. It participates in amino-acid biosynthesis; L-proline biosynthesis; L-glutamate 5-semialdehyde from L-glutamate: step 1/2. In terms of biological role, catalyzes the transfer of a phosphate group to glutamate to form L-glutamate 5-phosphate. In Oleidesulfovibrio alaskensis (strain ATCC BAA-1058 / DSM 17464 / G20) (Desulfovibrio alaskensis), this protein is Glutamate 5-kinase.